Reading from the N-terminus, the 240-residue chain is Proteasome subunit beta type-1 (240 aa).

N-acetylmethionine is present on M1. Positions 1 to 27 (MLSTAAYRDVERELGMGPHGSAGPVQL) are excised as a propeptide. O-linked (GlcNAc) serine glycosylation is present at S57. Phosphoserine occurs at positions 61 and 67. At Y149 the chain carries Phosphotyrosine. S161 carries the phosphoserine modification. K203 is modified (N6-acetyllysine). An O-linked (GlcNAc) serine glycan is attached at S208.

The protein belongs to the peptidase T1B family. As to quaternary structure, the 26S proteasome consists of a 20S proteasome core and two 19S regulatory subunits. The 20S proteasome core is a barrel-shaped complex made of 28 subunits that are arranged in four stacked rings. The two outer rings are each formed by seven alpha subunits, and the two inner rings are formed by seven beta subunits. The proteolytic activity is exerted by three beta-subunits PSMB5, PSMB6 and PSMB7. Interacts with SERPINB2. Interacts with RFPL4A. As to expression, detected in liver (at protein level).

The protein resides in the cytoplasm. The protein localises to the nucleus. Its function is as follows. Non-catalytic component of the 20S core proteasome complex involved in the proteolytic degradation of most intracellular proteins. This complex plays numerous essential roles within the cell by associating with different regulatory particles. Associated with two 19S regulatory particles, forms the 26S proteasome and thus participates in the ATP-dependent degradation of ubiquitinated proteins. The 26S proteasome plays a key role in the maintenance of protein homeostasis by removing misfolded or damaged proteins that could impair cellular functions, and by removing proteins whose functions are no longer required. Associated with the PA200 or PA28, the 20S proteasome mediates ubiquitin-independent protein degradation. This type of proteolysis is required in several pathways including spermatogenesis (20S-PA200 complex) or generation of a subset of MHC class I-presented antigenic peptides (20S-PA28 complex). The sequence is that of Proteasome subunit beta type-1 (Psmb1) from Mus musculus (Mouse).